A 439-amino-acid polypeptide reads, in one-letter code: Ribosomal protein uS12 methylthiotransferase RimO (439 aa).

The region spanning 2 to 114 (SKLYLMSLGC…VDEMILKKTN (113 aa)) is the MTTase N-terminal domain. Positions 11, 45, 77, 146, 150, and 153 each coordinate [4Fe-4S] cluster. Residues 132–363 (TGSNSHAFIK…VNEVIEKSFE (232 aa)) form the Radical SAM core domain.

This sequence belongs to the methylthiotransferase family. RimO subfamily. [4Fe-4S] cluster is required as a cofactor.

It is found in the cytoplasm. The catalysed reaction is L-aspartate(89)-[ribosomal protein uS12]-hydrogen + (sulfur carrier)-SH + AH2 + 2 S-adenosyl-L-methionine = 3-methylsulfanyl-L-aspartate(89)-[ribosomal protein uS12]-hydrogen + (sulfur carrier)-H + 5'-deoxyadenosine + L-methionine + A + S-adenosyl-L-homocysteine + 2 H(+). In terms of biological role, catalyzes the methylthiolation of an aspartic acid residue of ribosomal protein uS12. This Campylobacter jejuni (strain RM1221) protein is Ribosomal protein uS12 methylthiotransferase RimO.